Consider the following 323-residue polypeptide: Thymidylate synthase (323 aa).

DUMP contacts are provided by residues Arg-21 and 172–173 (RR). Cys-192 serves as the catalytic Nucleophile. Residues 214 to 217 (RSND), Asn-225, and 255 to 257 (HVY) contribute to the dUMP site. Asp-217 lines the (6R)-5,10-methylene-5,6,7,8-tetrahydrofolate pocket. Ala-322 is a (6R)-5,10-methylene-5,6,7,8-tetrahydrofolate binding site.

The protein belongs to the thymidylate synthase family. Bacterial-type ThyA subfamily. Homodimer.

The protein resides in the cytoplasm. The catalysed reaction is dUMP + (6R)-5,10-methylene-5,6,7,8-tetrahydrofolate = 7,8-dihydrofolate + dTMP. It participates in pyrimidine metabolism; dTTP biosynthesis. In terms of biological role, catalyzes the reductive methylation of 2'-deoxyuridine-5'-monophosphate (dUMP) to 2'-deoxythymidine-5'-monophosphate (dTMP) while utilizing 5,10-methylenetetrahydrofolate (mTHF) as the methyl donor and reductant in the reaction, yielding dihydrofolate (DHF) as a by-product. This enzymatic reaction provides an intracellular de novo source of dTMP, an essential precursor for DNA biosynthesis. The sequence is that of Thymidylate synthase from Pseudomonas syringae pv. tomato (strain ATCC BAA-871 / DC3000).